The chain runs to 217 residues: N-(5'-phosphoribosyl)anthranilate isomerase (217 aa).

Belongs to the TrpF family.

It catalyses the reaction N-(5-phospho-beta-D-ribosyl)anthranilate = 1-(2-carboxyphenylamino)-1-deoxy-D-ribulose 5-phosphate. It participates in amino-acid biosynthesis; L-tryptophan biosynthesis; L-tryptophan from chorismate: step 3/5. This chain is N-(5'-phosphoribosyl)anthranilate isomerase, found in Chlorobium chlorochromatii (strain CaD3).